The chain runs to 289 residues: 3-methyl-2-oxobutanoate hydroxymethyltransferase (289 aa).

Over residues 1-15 the composition is skewed to polar residues; it reads MSTTFQLDTSTSRAN. The segment at 1 to 20 is disordered; the sequence is MSTTFQLDTSTSRANPTPAP. D67 and D106 together coordinate Mg(2+). Residues 67 to 68, D106, and K136 each bind 3-methyl-2-oxobutanoate; that span reads DS. E138 serves as a coordination point for Mg(2+). The active-site Proton acceptor is E205.

It belongs to the PanB family. Homodecamer; pentamer of dimers. The cofactor is Mg(2+).

Its subcellular location is the cytoplasm. It catalyses the reaction 3-methyl-2-oxobutanoate + (6R)-5,10-methylene-5,6,7,8-tetrahydrofolate + H2O = 2-dehydropantoate + (6S)-5,6,7,8-tetrahydrofolate. It functions in the pathway cofactor biosynthesis; (R)-pantothenate biosynthesis; (R)-pantoate from 3-methyl-2-oxobutanoate: step 1/2. In terms of biological role, catalyzes the reversible reaction in which hydroxymethyl group from 5,10-methylenetetrahydrofolate is transferred onto alpha-ketoisovalerate to form ketopantoate. The sequence is that of 3-methyl-2-oxobutanoate hydroxymethyltransferase from Novosphingobium aromaticivorans (strain ATCC 700278 / DSM 12444 / CCUG 56034 / CIP 105152 / NBRC 16084 / F199).